Here is a 443-residue protein sequence, read N- to C-terminus: MEKLASLYHHHLATLQTRAQAVLARHKLDALLIHSGELLTVFLDDHDYPFKVNPQFKAWVPVTQVPNCWLWIDGVNPPKLWFYSPVDYWHSVAPVPESFWTAGVEIAVLRNADDIGQLLPAQRERVAYIGYAPQRAQDLGIRADNINPQGVLDYLHYHRAYKTDYELACMREAQKTAVIGHRAAHEAFLSGMSEFDINLAYLTATGHRDIDVPYGNIIALNEHAAVLHYTQLDHQVPSDVRSFLIDAGAEYNGYAADLTRTYSAQSDGAFAQLIKDLNQEMLALIDTMQAGVRYTDYHIQMHQRIAKLLKSHQLVRDISEEAMVEQGLTLPFLPHGLGHPLGLQVHDVAGFMQDDRGTHLAAPTQHPYLRCTRVLEPGMVMTIEPGIYFIESLLAPWREGECSQHFDWQKIDALKPFGGIRIEDNIVIHEGRVENMTRDLNLA.

Mn(2+) contacts are provided by aspartate 246, aspartate 257, histidine 339, glutamate 384, and glutamate 423.

This sequence belongs to the peptidase M24B family. Bacterial-type prolidase subfamily. The cofactor is Mn(2+).

It carries out the reaction Xaa-L-Pro dipeptide + H2O = an L-alpha-amino acid + L-proline. Functionally, splits dipeptides with a prolyl residue in the C-terminal position. The sequence is that of Xaa-Pro dipeptidase from Pectobacterium atrosepticum (strain SCRI 1043 / ATCC BAA-672) (Erwinia carotovora subsp. atroseptica).